A 1010-amino-acid polypeptide reads, in one-letter code: Lysosomal alpha-mannosidase (1010 aa).

A signal peptide spans 1–22 (MVIKKLFILIFCLFLIINEING). The propeptide at 23 to 40 (KKTKINDIKKSKPKLSST) is pro I. Histidine 51 and aspartate 53 together coordinate Zn(2+). N-linked (GlcNAc...) asparagine glycosylation is present at asparagine 68. The Zn(2+) site is built by aspartate 173 and histidine 420. The active-site Nucleophile is the aspartate 173. N-linked (GlcNAc...) asparagine glycans are attached at residues asparagine 480, asparagine 520, asparagine 528, asparagine 539, asparagine 623, asparagine 760, asparagine 784, asparagine 828, asparagine 954, and asparagine 963. Positions 508-595 (RNEPVRIPIP…GGGKINEKVS (88 aa)) are cleaved as a propeptide — pro II.

The protein belongs to the glycosyl hydrolase 38 family. As to quaternary structure, tetramer of equimolar amounts of 60 and 58 kDa subunits. Zn(2+) serves as cofactor. In terms of processing, first cleaved into the mature 58 kDa subunit and an intermediate 82 kDa subunit. The latter is then cleaved to its mature 60 kDa subunit form. These events occur in multiple intracellular compartments. The 60 kDa subunit may form one or more intramolecular disulfide bonds.

Its subcellular location is the lysosome. It carries out the reaction Hydrolysis of terminal, non-reducing alpha-D-mannose residues in alpha-D-mannosides.. This Dictyostelium discoideum (Social amoeba) protein is Lysosomal alpha-mannosidase (manA).